The chain runs to 73 residues: Putative antimicrobial peptide clone 4 (73 aa).

The first 22 residues, Met1 to Ala22, serve as a signal peptide directing secretion. Positions Asp45–Tyr73 are excised as a propeptide.

This sequence belongs to the non-disulfide-bridged peptide (NDBP) superfamily. Short antimicrobial peptide (group 4) family. In terms of tissue distribution, expressed by the venom gland.

The protein resides in the secreted. Its function is as follows. Antimicrobial peptide. Has a high antibacterial activity against the Gram-positive bacterium S.aureus (MIC=5-17.30 uM), the methicillin-resistant S.aureus (MRSA) (MIC=17.30 uM), and E.faecalis (MIC=69.23 uM). Has antifungal activity against Candida spp. and one Cryptococcus neoformans strains with MICs values ranging from 6.25 to 100 uM. Also shows an inhibitory activity on C.albicans biofilms at high concentrations. Has a moderate hemolytic potency (18% at 20 uM). Also inhibits the growth of the five cancer cell lines tested. In the model of polymicrobial sepsis, it exhibits an antibiotic effect, reducing the levels of microorganisms in the infectious focus and the inflammatory responses in the lung and cecum of septic animals. In Tityus costatus (Brazilian scorpion), this protein is Putative antimicrobial peptide clone 4.